Reading from the N-terminus, the 338-residue chain is 5-dehydro-2-deoxygluconokinase (338 aa).

It belongs to the carbohydrate kinase PfkB family.

The catalysed reaction is 5-dehydro-2-deoxy-D-gluconate + ATP = 6-phospho-5-dehydro-2-deoxy-D-gluconate + ADP + H(+). The protein operates within polyol metabolism; myo-inositol degradation into acetyl-CoA; acetyl-CoA from myo-inositol: step 5/7. Catalyzes the phosphorylation of 5-dehydro-2-deoxy-D-gluconate (2-deoxy-5-keto-D-gluconate or DKG) to 6-phospho-5-dehydro-2-deoxy-D-gluconate (DKGP). The chain is 5-dehydro-2-deoxygluconokinase from Clostridium perfringens (strain ATCC 13124 / DSM 756 / JCM 1290 / NCIMB 6125 / NCTC 8237 / Type A).